The following is a 545-amino-acid chain: Lysine--tRNA ligase (545 aa).

The 'HIGH' region motif lies at 33-41 (VSGLQHIGR). Positions 288 to 292 (DMSSS) match the 'KMSKS' region motif.

This sequence belongs to the class-I aminoacyl-tRNA synthetase family.

The protein resides in the cytoplasm. It catalyses the reaction tRNA(Lys) + L-lysine + ATP = L-lysyl-tRNA(Lys) + AMP + diphosphate. The polypeptide is Lysine--tRNA ligase (lysS) (Aeropyrum pernix (strain ATCC 700893 / DSM 11879 / JCM 9820 / NBRC 100138 / K1)).